Here is a 237-residue protein sequence, read N- to C-terminus: Protein GrpE (237 aa).

Disordered regions lie at residues 1-52 (MSGD…RLQQ) and 200-237 (KVSM…QPGV). Residues 27–40 (ASINSDEGQSSAQS) are compositionally biased toward polar residues. Low complexity predominate over residues 204 to 218 (GPGPQSGASPSSAQP).

The protein belongs to the GrpE family. In terms of assembly, homodimer.

It localises to the cytoplasm. Its function is as follows. Participates actively in the response to hyperosmotic and heat shock by preventing the aggregation of stress-denatured proteins, in association with DnaK and GrpE. It is the nucleotide exchange factor for DnaK and may function as a thermosensor. Unfolded proteins bind initially to DnaJ; upon interaction with the DnaJ-bound protein, DnaK hydrolyzes its bound ATP, resulting in the formation of a stable complex. GrpE releases ADP from DnaK; ATP binding to DnaK triggers the release of the substrate protein, thus completing the reaction cycle. Several rounds of ATP-dependent interactions between DnaJ, DnaK and GrpE are required for fully efficient folding. The polypeptide is Protein GrpE (Prochlorococcus marinus (strain MIT 9313)).